An 821-amino-acid polypeptide reads, in one-letter code: BDNF/NT-3 growth factors receptor (821 aa).

Residues 1–31 form the signal peptide; the sequence is MSPWLKWHGPAMARLWGLCLLVLGFWRASLA. Intrachain disulfides connect Cys32–Cys38 and Cys36–Cys45. Positions 32-61 constitute an LRRNT domain; the sequence is CPTSCKCSSARIWCTEPSPGIVAFPRLEPN. The Extracellular segment spans residues 32–429; that stretch reads CPTSCKCSSA…DVADQSNREH (398 aa). Asn67, Asn95, and Asn121 each carry an N-linked (GlcNAc...) asparagine glycan. LRR repeat units lie at residues 92-113 and 116-137; these read GLRNLTIVDSGLKFVAYKAFLK and NLRHINFTRNKLTSLSRRHFRH. Positions 148–196 constitute an LRRCT domain; it reads NPFTCSCDIMWLKTLQETKSSPDTQDLYCLNESSKNMPLANLQIPNCGL. 2 cysteine pairs are disulfide-bonded: Cys152–Cys176 and Cys154–Cys194. N-linked (GlcNAc...) asparagine glycans are attached at residues Asn178, Asn205, Asn241, Asn254, Asn280, Asn325, Asn338, Asn350, and Asn411. Ig-like C2-type domains follow at residues 197–282 and 301–365; these read PSAR…VNLT and WCIP…MAKN. An intrachain disulfide couples Cys218 to Cys266. Cysteines 302 and 345 form a disulfide. Residues 430-453 form a helical membrane-spanning segment; it reads LSVYAVVVIASVVGFCLLVMLLLL. An interaction with MAPK8IP3/JIP3 region spans residues 454-465; sequence KLARHSKFGMKG. Residues 454 to 821 are Cytoplasmic-facing; it reads KLARHSKFGM…ASPVYLDILG (368 aa). The tract at residues 474-497 is disordered; it reads DDSASPLHHISNGSNTPSSSEGGP. The span at 484-494 shows a compositional bias: polar residues; sequence SNGSNTPSSSE. Phosphotyrosine is present on Tyr515. Residues 537–806 enclose the Protein kinase domain; it reads IVLKRELGEG…KNIKSIHTLL (270 aa). Residues 543–551 and Lys571 contribute to the ATP site; that span reads LGEGAFGKV. The active-site Proton acceptor is Asp675. Residues Tyr701, Tyr705, Tyr706, and Tyr816 each carry the phosphotyrosine; by autocatalysis modification.

Belongs to the protein kinase superfamily. Tyr protein kinase family. Insulin receptor subfamily. As to quaternary structure, exists in a dynamic equilibrium between monomeric (low affinity) and dimeric (high affinity) structures. Interacts (phosphorylated upon activation by BDNF) with SHC1; mediates SHC1 phosphorylation and activation. Interacts (phosphorylated upon activation by BDNF) with PLCG1 and/or PLCG2; mediates PLCG1 phosphorylation and activation. Interacts with SH2B1 and SH2B2. Interacts with NGFR; may regulate the ligand specificity of the receptor. Interacts with SORCS2; this interaction is important for normal targeting to post-synaptic densities in response to high-frequency stimulation. Interacts (phosphorylated upon ligand-binding) with SH2D1A; regulates NTRK2. Interacts with SQSTM1 and KIDINS220. Interacts (phosphorylated upon ligand-binding) with FRS2; activates the MAPK signaling pathway. Interacts with APPL1. Interacts with MAPK8IP3/JIP3 and KLC1; interaction with KLC1 is mediated by MAPK8IP3/JIP3. Interacts with SORL1; this interaction facilitates NTRK2 trafficking between synaptic plasma membranes, postsynaptic densities and cell soma, hence positively regulates BDNF signaling. Interacts with SLITRK2. Post-translationally, phosphorylated. Undergoes ligand-mediated autophosphorylation that is required for interaction with SHC1 and PLCG1 and other downstream effectors. Some isoforms are not phosphorylated. In terms of processing, ubiquitinated. Undergoes polyubiquitination upon activation; regulated by NGFR. Ubiquitination regulates the internalization of the receptor. As to expression, expressed in the brain, in neurons (at protein level). Detected in hippocampus (at protein level). Widely expressed in the central and peripheral nervous system. The different forms are differentially expressed in various cell types. Isoform GP95-TRKB is specifically expressed in glial cells.

The protein resides in the cell membrane. It localises to the endosome membrane. Its subcellular location is the early endosome membrane. It is found in the cell projection. The protein localises to the axon. The protein resides in the dendrite. It localises to the cytoplasm. Its subcellular location is the perinuclear region. It is found in the postsynaptic density. The catalysed reaction is L-tyrosyl-[protein] + ATP = O-phospho-L-tyrosyl-[protein] + ADP + H(+). The formation of active receptors dimers able to fully transduce the ligand-mediated signal, may be negatively regulated by the formation of inactive heterodimers with the non-catalytic isoforms. The neuronal activity and the influx of calcium positively regulate the kinase activity and the internalization of the receptor which are both important for active signaling. Regulated by NGFR that may control the internalization of the receptor. NGFR may also stimulate the activation by BDNF compared to NTF3 and NTF4. SH2D1A inhibits the autophosphorylation of the receptor, and alters the recruitment and activation of downstream effectors and signaling cascades. Functionally, receptor tyrosine kinase involved in the development and the maturation of the central and the peripheral nervous systems through regulation of neuron survival, proliferation, migration, differentiation, and synapse formation and plasticity. Receptor for BDNF/brain-derived neurotrophic factor and NTF4/neurotrophin-4. Alternatively can also bind NTF3/neurotrophin-3 which is less efficient in activating the receptor but regulates neuron survival through NTRK2. Upon ligand-binding, undergoes homodimerization, autophosphorylation and activation. Recruits, phosphorylates and/or activates several downstream effectors including SHC1, FRS2, SH2B1, SH2B2 and PLCG1 that regulate distinct overlapping signaling cascades. Through SHC1, FRS2, SH2B1, SH2B2 activates the GRB2-Ras-MAPK cascade that regulates for instance neuronal differentiation including neurite outgrowth. Through the same effectors controls the Ras-PI3 kinase-AKT1 signaling cascade that mainly regulates growth and survival. Through PLCG1 and the downstream protein kinase C-regulated pathways controls synaptic plasticity. Thereby, plays a role in learning and memory by regulating both short term synaptic function and long-term potentiation. PLCG1 also leads to NF-Kappa-B activation and the transcription of genes involved in cell survival. Hence, it is able to suppress anoikis, the apoptosis resulting from loss of cell-matrix interactions. Isoform GP95-TRKB may also play a role in neutrophin-dependent calcium signaling in glial cells and mediate communication between neurons and glia. This is BDNF/NT-3 growth factors receptor from Mus musculus (Mouse).